The chain runs to 34 residues: Photosystem II reaction center protein T (34 aa).

Residues 3–23 (ALVYTFLLVSTLGIIFFAIFF) form a helical membrane-spanning segment.

The protein belongs to the PsbT family. As to quaternary structure, PSII is composed of 1 copy each of membrane proteins PsbA, PsbB, PsbC, PsbD, PsbE, PsbF, PsbH, PsbI, PsbJ, PsbK, PsbL, PsbM, PsbT, PsbY, PsbZ, Psb30/Ycf12, at least 3 peripheral proteins of the oxygen-evolving complex and a large number of cofactors. It forms dimeric complexes.

The protein resides in the plastid. The protein localises to the chloroplast thylakoid membrane. In terms of biological role, found at the monomer-monomer interface of the photosystem II (PS II) dimer, plays a role in assembly and dimerization of PSII. PSII is a light-driven water plastoquinone oxidoreductase, using light energy to abstract electrons from H(2)O, generating a proton gradient subsequently used for ATP formation. This chain is Photosystem II reaction center protein T, found in Atropa belladonna (Belladonna).